The following is a 370-amino-acid chain: Seipin (370 aa).

An N-terminal signal peptide occupies residues 1–18 (MNILLRLIVFALDPLGLG). Residues 19–55 (RRFLIRPAVNLGWNVYDRVRSKADEKVGTVRELVLRL) lie on the Cytoplasmic side of the membrane. The chain crosses the membrane as a helical span at residues 56 to 76 (GLIAFAVVLIIWLAVFMYAAF). Over 77-251 (YYVYMPAISH…GLRYIMFNWP (175 aa)) the chain is Lumenal. The chain crosses the membrane as a helical span at residues 252–272 (VLSAIVAISTNLFFILVVFLL). The Cytoplasmic segment spans residues 273–370 (SWYHWSDAKW…RPTKKTTADH (98 aa)). The disordered stretch occupies residues 346-370 (KSRSGKRESPDALRKRPTKKTTADH). A compositionally biased stretch (basic and acidic residues) spans 350 to 359 (GKRESPDALR).

As to expression, widely expressed, with highest levels detected in fat body, moderate levels detected in salivary gland, midgut and muscle, and weak expression detected in brain.

The protein localises to the endoplasmic reticulum membrane. Its subcellular location is the lipid droplet. In terms of biological role, acts as a tissue-autonomous lipid modulator, preventing ectopic lipid accumulation in salivary gland (a non-adipose tissue) and in promoting lipid storage in fat tissue. Required for the growth and maturation of small nascent lipid droplets (LDs) into larger mature LDs. The protein is Seipin of Drosophila melanogaster (Fruit fly).